The sequence spans 244 residues: Phosphoadenosine 5'-phosphosulfate reductase (244 aa).

The active-site Nucleophile; cysteine thiosulfonate intermediate is Cys-239.

This sequence belongs to the PAPS reductase family. CysH subfamily.

Its subcellular location is the cytoplasm. The enzyme catalyses [thioredoxin]-disulfide + sulfite + adenosine 3',5'-bisphosphate + 2 H(+) = [thioredoxin]-dithiol + 3'-phosphoadenylyl sulfate. The protein operates within sulfur metabolism; hydrogen sulfide biosynthesis; sulfite from sulfate: step 3/3. In terms of biological role, catalyzes the formation of sulfite from phosphoadenosine 5'-phosphosulfate (PAPS) using thioredoxin as an electron donor. The chain is Phosphoadenosine 5'-phosphosulfate reductase from Buchnera aphidicola subsp. Acyrthosiphon pisum (strain Tuc7).